The chain runs to 728 residues: MSYKYIFLLSAFTLGVPPGIYCQGRNEVVVDYNTRRFLSGVSELDRSKYFNIHSTSDDDKDVGKFLADYQVGLGRKFWGPYSYAYNKTHEVGKYPQMKPYSGNISVKRYIATEHPYVQHIQGGIDVQAAGAWSAEYYSNSELVPEFFEPLNEPFVHANDAGFTVQGQAMRELMVDFYASIGKHIHNNPRLNGKMKVIGYAAAYPAWEDGNFNYWNTRMKMFIDRAGAYMDGFSVHLYDGINVTGTDTKRSGSNSEAVLDMVEAYSYIKFGHVKPLAISEFGGIDNSKPDDSYDDISSVRSVSSFNHFLFNLMERQDNLFISIPFVSDKAEWHITAANNYTSYSAALFIPDNPQNLKNTTWRLNDKKYFFELWKNVKGERVDITSSNPDIQVQAFKDGGRLYIALDNLDDNPQTVYLNNKNSWKDVSNVTKRSLYVNYNAGIEYTEQNVPSMPESISIVPNQTIVLVADVSSSAFTNSIIRNKYYSSEYLKPISAGSSLSFPFTGIESGSGRASLRMSIGRPVSASKKPVVKINGTAVSVPDNWKGYGQSNRNIFFGMIEVPFDIQLLKNGDNNVDITFSDGGGHVSSMILQVEKYTVSTLQNGTFSEGLSAWQPLGNYGTVCVQTDNAGNNVACISGHAGLMQRVDMESGRTYRFSADVKTEGACKLKVMLQDMSTGTVYTEEFSSPGNYKAVSFDFNSTVKKVVCAIVCERQNDAAWIDNIVLLPQN.

Positions 1–22 (MSYKYIFLLSAFTLGVPPGIYC) are cleaved as a signal peptide. Residues H53, K76, W78, K87, H114, and N151 each coordinate substrate. The Proton donor role is filled by E152. Residues H235, E279, S326, and W331 each coordinate substrate. Residue E279 is the Nucleophile of the active site. Positions 599 to 701 (TLQNGTFSEG…AVSFDFNSTV (103 aa)) constitute a CBM-cenC domain.

Belongs to the glycosyl hydrolase 86 family.

It catalyses the reaction Hydrolysis of beta-D-galactopyranose-(1-&gt;4)-alpha-L-galactopyranose-6-sulfate linkages in porphyran.. Its function is as follows. Cleaves the sulfated polysaccharide porphyran at the (1-&gt;4) linkages between beta-D-galactopyranose and alpha-L-galactopyranose-6-sulfate, forming mostly the disaccharide alpha-L-galactopyranose-6-sulfate-(1-&gt;3)-beta-D-galactose. Some longer oligosaccharides of even number of residues are also observed. Inactive on the non-sulfated agarose portion of the porphyran backbone. Can also use methylated galactoses. The protein is Beta-porphyranase A of Phocaeicola plebeius (strain DSM 17135 / JCM 12973 / CCUG 54634 / M2) (Bacteroides plebeius).